Consider the following 174-residue polypeptide: Major allergen Can f 1 (174 aa).

A signal peptide spans 1–18 (MKTLLLTIGFSLIAILQA). A disulfide bond links cysteine 78 and cysteine 169. The N-linked (GlcNAc...) asparagine glycan is linked to asparagine 80.

Belongs to the calycin superfamily. Lipocalin family. Tongue epithelial tissue.

It localises to the secreted. This is Major allergen Can f 1 from Canis lupus familiaris (Dog).